The sequence spans 197 residues: Recombination protein RecR (197 aa).

The C4-type zinc-finger motif lies at 57–72 (CSICFAITEDDPCAIC). The 96-residue stretch at 79-174 (GTICVVENSQ…RISRLAHGIP (96 aa)) folds into the Toprim domain.

This sequence belongs to the RecR family.

May play a role in DNA repair. It seems to be involved in an RecBC-independent recombinational process of DNA repair. It may act with RecF and RecO. This Pelobacter propionicus (strain DSM 2379 / NBRC 103807 / OttBd1) protein is Recombination protein RecR.